We begin with the raw amino-acid sequence, 325 residues long: Deoxyhypusine hydroxylase (325 aa).

S2 bears the N-acetylserine mark. HEAT-like PBS-type repeat units follow at residues L77–D103 and V110–E136. H79, E80, H112, and E113 together coordinate Fe cation. A Phosphoserine modification is found at S126. T187 bears the Phosphothreonine mark. HEAT-like PBS-type repeat units follow at residues L202–E231, F235–R261, and V268–D294. Fe cation is bound by residues H237, E238, H270, and E271. Position 281 is a phosphoserine (S281).

Belongs to the deoxyhypusine hydroxylase family. It depends on Fe(2+) as a cofactor.

It is found in the cytoplasm. It localises to the nucleus. It carries out the reaction [eIF5A protein]-deoxyhypusine + AH2 + O2 = [eIF5A protein]-hypusine + A + H2O. It functions in the pathway protein modification; eIF5A hypusination. Catalyzes the hydroxylation of the N(6)-(4-aminobutyl)-L-lysine intermediate to form hypusine, an essential post-translational modification only found in mature eIF-5A factor. The polypeptide is Deoxyhypusine hydroxylase (Saccharomyces cerevisiae (strain ATCC 204508 / S288c) (Baker's yeast)).